Consider the following 499-residue polypeptide: Glycerol kinase (499 aa).

Thr-13 contacts ADP. Positions 13, 14, and 15 each coordinate ATP. Thr-13 is a binding site for sn-glycerol 3-phosphate. Arg-17 is a binding site for ADP. The sn-glycerol 3-phosphate site is built by Arg-83, Glu-84, Tyr-135, and Asp-244. Residues Arg-83, Glu-84, Tyr-135, Asp-244, and Gln-245 each contribute to the glycerol site. ADP-binding residues include Thr-266 and Gly-309. ATP-binding residues include Thr-266, Gly-309, Gln-313, and Gly-410. The ADP site is built by Gly-410 and Asn-414.

The protein belongs to the FGGY kinase family.

The catalysed reaction is glycerol + ATP = sn-glycerol 3-phosphate + ADP + H(+). The protein operates within polyol metabolism; glycerol degradation via glycerol kinase pathway; sn-glycerol 3-phosphate from glycerol: step 1/1. Inhibited by fructose 1,6-bisphosphate (FBP). Its function is as follows. Key enzyme in the regulation of glycerol uptake and metabolism. Catalyzes the phosphorylation of glycerol to yield sn-glycerol 3-phosphate. The protein is Glycerol kinase of Paraburkholderia phymatum (strain DSM 17167 / CIP 108236 / LMG 21445 / STM815) (Burkholderia phymatum).